The primary structure comprises 98 residues: DNA-directed RNA polymerase subunit omega (98 aa).

The protein belongs to the RNA polymerase subunit omega family. The RNAP catalytic core consists of 2 alpha, 1 beta, 1 beta' and 1 omega subunit. When a sigma factor is associated with the core the holoenzyme is formed, which can initiate transcription.

It carries out the reaction RNA(n) + a ribonucleoside 5'-triphosphate = RNA(n+1) + diphosphate. Promotes RNA polymerase assembly. Latches the N- and C-terminal regions of the beta' subunit thereby facilitating its interaction with the beta and alpha subunits. This chain is DNA-directed RNA polymerase subunit omega, found in Xylella fastidiosa (strain M12).